A 125-amino-acid polypeptide reads, in one-letter code: Putative glutaredoxin-C2 (125 aa).

The 102-residue stretch at Ala2–Trp103 folds into the Glutaredoxin domain. A disulfide bond links Cys22 and Cys25.

This sequence belongs to the glutaredoxin family. CC-type subfamily.

It is found in the cytoplasm. In terms of biological role, has a glutathione-disulfide oxidoreductase activity in the presence of NADPH and glutathione reductase. Reduces low molecular weight disulfides and proteins. The protein is Putative glutaredoxin-C2 (GRXC2) of Oryza sativa subsp. japonica (Rice).